We begin with the raw amino-acid sequence, 590 residues long: Aspartate--tRNA(Asp/Asn) ligase (590 aa).

Residue Glu169 participates in L-aspartate binding. The tract at residues 193–196 is aspartate; that stretch reads QLFK. Arg215 lines the L-aspartate pocket. ATP-binding positions include 215–217 and Gln224; that span reads RDE. L-aspartate is bound at residue His447. Residue Glu479 participates in ATP binding. L-aspartate is bound at residue Arg486. Residue 531-534 coordinates ATP; that stretch reads GWDR. Residues 556-590 form a disordered region; that stretch reads GGFDPLTAAPAPITPEQRKEAGVDARPQQDLPPQS.

It belongs to the class-II aminoacyl-tRNA synthetase family. Type 1 subfamily. Homodimer.

It is found in the cytoplasm. It catalyses the reaction tRNA(Asx) + L-aspartate + ATP = L-aspartyl-tRNA(Asx) + AMP + diphosphate. In terms of biological role, aspartyl-tRNA synthetase with relaxed tRNA specificity since it is able to aspartylate not only its cognate tRNA(Asp) but also tRNA(Asn). Reaction proceeds in two steps: L-aspartate is first activated by ATP to form Asp-AMP and then transferred to the acceptor end of tRNA(Asp/Asn). The protein is Aspartate--tRNA(Asp/Asn) ligase of Nocardioides sp. (strain ATCC BAA-499 / JS614).